Reading from the N-terminus, the 864-residue chain is Coiled-coil and C2 domain-containing protein 1B (864 aa).

Residues 82-154 form a disordered region; the sequence is QDCMTDMTGE…VNSSVAEIQH (73 aa). 2 stretches are compositionally biased toward acidic residues: residues 89 to 104 and 111 to 129; these read TGEDDDDDLEEDEELL and VGEEEEVEQSQPSDTEESE. Residues 91-118 adopt a coiled-coil conformation; that stretch reads EDDDDDLEEDEELLAELQDVVGEEEEVE. Over residues 142–154 the composition is skewed to polar residues; it reads EQQVNSSVAEIQH. Residues 162–209 are a coiled coil; that stretch reads GMLQVLEERIGNYKEAISNAKLSNESAKARRYERGLKTLESMLSAARQ. The tract at residues 218–249 is disordered; the sequence is IPPPVACGKPAVSPTTDVPTTDTSKQGLGDLN. Positions 229-241 are enriched in low complexity; the sequence is VSPTTDVPTTDTS. Residues 385–412 adopt a coiled-coil conformation; it reads VGSLLQALQQRMEKYKSAAQQAKSSGDD. Disordered stretches follow at residues 441 to 463 and 478 to 502; these read AELPVPPGFPPLPGMEQTEEEGS and AGEDVDDDEDECQAKPPGHPKPTQL. Residues 444–453 are compositionally biased toward pro residues; that stretch reads PVPPGFPPLP. Coiled-coil stretches lie at residues 464 to 488 and 535 to 564; these read VEKALEAAQKLAKTAGEDVDDDEDE and PAVQEQLEFLEHRKKQYRKAALQAKQKNDL. The C2 domain maps to 685 to 820; that stretch reads HFEDKTLKIV…ETQCEIREIV (136 aa).

This sequence belongs to the CC2D1 family.

In Xenopus laevis (African clawed frog), this protein is Coiled-coil and C2 domain-containing protein 1B (cc2d1b).